We begin with the raw amino-acid sequence, 253 residues long: Imidazole glycerol phosphate synthase subunit HisF (253 aa).

Active-site residues include Asp11 and Asp130.

Belongs to the HisA/HisF family. Heterodimer of HisH and HisF.

Its subcellular location is the cytoplasm. The catalysed reaction is 5-[(5-phospho-1-deoxy-D-ribulos-1-ylimino)methylamino]-1-(5-phospho-beta-D-ribosyl)imidazole-4-carboxamide + L-glutamine = D-erythro-1-(imidazol-4-yl)glycerol 3-phosphate + 5-amino-1-(5-phospho-beta-D-ribosyl)imidazole-4-carboxamide + L-glutamate + H(+). The protein operates within amino-acid biosynthesis; L-histidine biosynthesis; L-histidine from 5-phospho-alpha-D-ribose 1-diphosphate: step 5/9. In terms of biological role, IGPS catalyzes the conversion of PRFAR and glutamine to IGP, AICAR and glutamate. The HisF subunit catalyzes the cyclization activity that produces IGP and AICAR from PRFAR using the ammonia provided by the HisH subunit. The protein is Imidazole glycerol phosphate synthase subunit HisF of Opitutus terrae (strain DSM 11246 / JCM 15787 / PB90-1).